The following is an 833-amino-acid chain: AdoMet-dependent rRNA methyltransferase SPB1 (833 aa).

Residues Gly-59, Trp-61, Asp-79, Asp-95, and Asp-120 each contribute to the S-adenosyl-L-methionine site. Lys-160 functions as the Proton acceptor in the catalytic mechanism. Coiled-coil stretches lie at residues 348-389 (EEEQ…QLNM) and 453-481 (RDEL…SERD). A compositionally biased stretch (basic and acidic residues) spans 477–493 (KSERDAKFRAKQARESS). Disordered regions lie at residues 477 to 532 (KSER…SDDD), 592 to 645 (KRKL…EKHS), and 776 to 810 (VTKK…GKYK). Acidic residues-rich tracts occupy residues 505 to 532 (QSDE…SDDD) and 622 to 634 (EDGD…DSEE). A compositionally biased stretch (basic and acidic residues) spans 635–645 (EAKRTKQEKHS). A coiled-coil region spans residues 730–782 (AEAKARKKHRAVARLEKLKKKAGLINDDSDKSEKDKAEEIAKLMRKVTKKAKQ).

This sequence belongs to the class I-like SAM-binding methyltransferase superfamily. RNA methyltransferase RlmE family. SPB1 subfamily. As to quaternary structure, component of the nucleolar and nucleoplasmic pre-60S ribosomal particle.

Its subcellular location is the nucleus. The protein localises to the nucleolus. The enzyme catalyses a ribonucleotide in rRNA + S-adenosyl-L-methionine = a 2'-O-methylribonucleotide in rRNA + S-adenosyl-L-homocysteine + H(+). Required for proper assembly of pre-ribosomal particles during the biogenesis of the 60S ribosomal subunit. The chain is AdoMet-dependent rRNA methyltransferase SPB1 from Kluyveromyces lactis (strain ATCC 8585 / CBS 2359 / DSM 70799 / NBRC 1267 / NRRL Y-1140 / WM37) (Yeast).